Here is a 508-residue protein sequence, read N- to C-terminus: MSIRPDEISTVLKDKIANYESQVDVYEVGTVLYIGDGIARVHGLENVMANELVEFPGEIYGMALNLEEDNVGCVLLGEYSHIKEGDQVKRTGRIIEVPVGDDLVGRVVNPVGEPRDGKGPIEATDFRPVETRAPGVIDRKPVEEPLQTGLKAIDSMIPIGRGQRELIIGDRGTGKSAIGIDTILNQKDSDVYCIYVAIGQKKSTVAQVVDVLERHGAMDYTTVVAATADEPAPLLYLAPYAGCSMGEKFMHEGKHVLVVYDDLSKHAASYRELSLLLRRPPGREAYPGDIFYLHSRLLERAAKLNDENGGGSLTALPIIETQAGDVSAYIPTNVISITDGQIYLISDLFHAGQRPAVDVGISVSRVGGSAQLKGMKQVSGTLRLDLAQYRELEAFAQFGTDLDKSTQQKLARGKRTFEILKQDQYQPMPVADQIVIIFCATHGLLDDLEVEQIKEFEKFLLSYVKDNEPGIYQQVETGEKISDELEDQLKEVINKAKEQFKEEKELTG.

169 to 176 (GDRGTGKS) is a binding site for ATP.

The protein belongs to the ATPase alpha/beta chains family. In terms of assembly, F-type ATPases have 2 components, CF(1) - the catalytic core - and CF(0) - the membrane proton channel. CF(1) has five subunits: alpha(3), beta(3), gamma(1), delta(1), epsilon(1). CF(0) has three main subunits: a(1), b(2) and c(9-12). The alpha and beta chains form an alternating ring which encloses part of the gamma chain. CF(1) is attached to CF(0) by a central stalk formed by the gamma and epsilon chains, while a peripheral stalk is formed by the delta and b chains.

It localises to the cell membrane. The enzyme catalyses ATP + H2O + 4 H(+)(in) = ADP + phosphate + 5 H(+)(out). Functionally, produces ATP from ADP in the presence of a proton gradient across the membrane. The alpha chain is a regulatory subunit. The polypeptide is ATP synthase subunit alpha (Natranaerobius thermophilus (strain ATCC BAA-1301 / DSM 18059 / JW/NM-WN-LF)).